The sequence spans 207 residues: Small ribosomal subunit protein uS4 (207 aa).

The interval 30–51 (DKSKFDSKPGQHGRTSGARTSD) is disordered. An S4 RNA-binding domain is found at 97–157 (SRLDNVVYRM…EKSKKQGRIA (61 aa)).

This sequence belongs to the universal ribosomal protein uS4 family. As to quaternary structure, part of the 30S ribosomal subunit. Contacts protein S5. The interaction surface between S4 and S5 is involved in control of translational fidelity.

One of the primary rRNA binding proteins, it binds directly to 16S rRNA where it nucleates assembly of the body of the 30S subunit. In terms of biological role, with S5 and S12 plays an important role in translational accuracy. The chain is Small ribosomal subunit protein uS4 from Verminephrobacter eiseniae (strain EF01-2).